Reading from the N-terminus, the 53-residue chain is Abaecin (53 aa).

The first 19 residues, 1-19 (MKVVIFIFALLATICAAFA), serve as a signal peptide directing secretion.

The protein localises to the secreted. In terms of biological role, this peptide has bactericidal activity. This chain is Abaecin, found in Apis mellifera (Honeybee).